A 413-amino-acid chain; its full sequence is Serine hydroxymethyltransferase (413 aa).

(6S)-5,6,7,8-tetrahydrofolate contacts are provided by residues leucine 117 and 121-123; that span reads GHL. The residue at position 226 (lysine 226) is an N6-(pyridoxal phosphate)lysine. (6S)-5,6,7,8-tetrahydrofolate is bound by residues glutamate 239 and 349–351; that span reads SPF.

Belongs to the SHMT family. Homodimer. Pyridoxal 5'-phosphate is required as a cofactor.

Its subcellular location is the cytoplasm. It catalyses the reaction (6R)-5,10-methylene-5,6,7,8-tetrahydrofolate + glycine + H2O = (6S)-5,6,7,8-tetrahydrofolate + L-serine. It functions in the pathway one-carbon metabolism; tetrahydrofolate interconversion. Its pathway is amino-acid biosynthesis; glycine biosynthesis; glycine from L-serine: step 1/1. Its function is as follows. Catalyzes the reversible interconversion of serine and glycine with tetrahydrofolate (THF) serving as the one-carbon carrier. This reaction serves as the major source of one-carbon groups required for the biosynthesis of purines, thymidylate, methionine, and other important biomolecules. Also exhibits THF-independent aldolase activity toward beta-hydroxyamino acids, producing glycine and aldehydes, via a retro-aldol mechanism. This is Serine hydroxymethyltransferase from Bacillus cytotoxicus (strain DSM 22905 / CIP 110041 / 391-98 / NVH 391-98).